Reading from the N-terminus, the 117-residue chain is uncharacterized protein (117 aa).

The N-terminal stretch at 1 to 22 (MHVKYLAGIVGAALLMAGCSSS) is a signal peptide.

This is an uncharacterized protein from Escherichia coli O6:H1 (strain CFT073 / ATCC 700928 / UPEC).